The following is a 56-amino-acid chain: UPF0391 membrane protein Noc_0482 (56 aa).

The next 2 helical transmembrane spans lie at 1-21 (MFGW…FGFT) and 29-49 (HIAW…LLLG).

The protein belongs to the UPF0391 family.

The protein localises to the cell membrane. The protein is UPF0391 membrane protein Noc_0482 of Nitrosococcus oceani (strain ATCC 19707 / BCRC 17464 / JCM 30415 / NCIMB 11848 / C-107).